Consider the following 179-residue polypeptide: Ribosome maturation factor RimM (179 aa).

The PRC barrel domain occupies Lys100–Leu176.

Belongs to the RimM family. In terms of assembly, binds ribosomal protein uS19.

It is found in the cytoplasm. An accessory protein needed during the final step in the assembly of 30S ribosomal subunit, possibly for assembly of the head region. Essential for efficient processing of 16S rRNA. May be needed both before and after RbfA during the maturation of 16S rRNA. It has affinity for free ribosomal 30S subunits but not for 70S ribosomes. The sequence is that of Ribosome maturation factor RimM from Prochlorococcus marinus (strain MIT 9312).